Consider the following 504-residue polypeptide: Xanthotoxol synthase (504 aa).

Residues Pro-3–His-23 form a helical membrane-spanning segment. Positions Pro-363 to Ile-368 are substrate specificity. Residue Cys-444 participates in heme binding.

Belongs to the cytochrome P450 family. Requires heme as cofactor.

Its subcellular location is the microsome membrane. The catalysed reaction is psoralen + reduced [NADPH--hemoprotein reductase] + O2 = xanthotoxol + oxidized [NADPH--hemoprotein reductase] + H2O + H(+). It catalyses the reaction 6-methoxycoumarin + reduced [NADPH--hemoprotein reductase] + O2 = scopoletin + oxidized [NADPH--hemoprotein reductase] + H2O + H(+). It functions in the pathway secondary metabolite biosynthesis. Its function is as follows. Involved in the biosynthesis of coumarins and furanocoumarins (FCs), natural products required for defense responses against attacks by predators with potential medical and agroindustrial usages such as anticoagulant, rodenticide and artificial vanilla substitutes. Catalyzes the conversion of psoralen into xanthotoxol and of 6-methoxycoumarin into scopoletin. Can also convert with a lower efficiency scopoletin into fraxetin and 7-methoxycoumarin into daphnetin-7-methylether, and use 7-methoxy-3-methylcoumarin as substrate. The sequence is that of Xanthotoxol synthase from Pastinaca sativa (Wild parsnip).